The primary structure comprises 856 residues: uncharacterized protein (856 aa).

This is an uncharacterized protein from Rickettsia felis (strain ATCC VR-1525 / URRWXCal2) (Rickettsia azadi).